An 891-amino-acid polypeptide reads, in one-letter code: DNA mismatch repair protein MutS (891 aa).

Gly646 to Ser653 lines the ATP pocket.

This sequence belongs to the DNA mismatch repair MutS family.

In terms of biological role, this protein is involved in the repair of mismatches in DNA. It is possible that it carries out the mismatch recognition step. This protein has a weak ATPase activity. This is DNA mismatch repair protein MutS from Rickettsia typhi (strain ATCC VR-144 / Wilmington).